An 889-amino-acid chain; its full sequence is Phosphofurin acidic cluster sorting protein 2 (889 aa).

Disordered stretches follow at residues Asp180–Thr246, Leu293–Arg463, and Ser687–Val740. Residues Ser343 to Arg358 show a composition bias toward basic and acidic residues. Ser390, Ser416, Ser453, Ser691, and Ser694 each carry phosphoserine. Low complexity-rich tracts occupy residues Ser687–Ser720 and Pro727–Ser737.

It belongs to the PACS family. As to quaternary structure, interacts with BID and PKD2. Interacts with SIRT1. Interacts with HDAC1. Interacts with TRPV1. Interacts with WDR37. (Microbial infection) Interacts with HIV-1 Nef. As to expression, broadly expressed, with greatest levels in skeletal muscle followed by heart, brain, pancreas and testis.

It is found in the endoplasmic reticulum. It localises to the mitochondrion. In terms of biological role, multifunctional sorting protein that controls the endoplasmic reticulum (ER)-mitochondria communication, including the apposition of mitochondria with the ER and ER homeostasis. In addition, in response to apoptotic inducer, translocates BIB to mitochondria, which initiates a sequence of events including the formation of mitochondrial truncated BID, the release of cytochrome c, the activation of caspase-3 thereby causing cell death. May also be involved in ion channel trafficking, directing acidic cluster-containing ion channels to distinct subcellular compartments. This Homo sapiens (Human) protein is Phosphofurin acidic cluster sorting protein 2.